A 454-amino-acid polypeptide reads, in one-letter code: Ornithine aminotransferase (454 aa).

3 residues coordinate pyridoxal 5'-phosphate: Gly-124, Thr-125, and Gln-267. N6-(pyridoxal phosphate)lysine is present on Lys-293. Pyridoxal 5'-phosphate is bound at residue Thr-321.

This sequence belongs to the class-III pyridoxal-phosphate-dependent aminotransferase family. As to quaternary structure, homotetramer; dimer of dimers. Pyridoxal 5'-phosphate serves as cofactor.

It carries out the reaction L-ornithine + 2-oxoglutarate = L-glutamate 5-semialdehyde + L-glutamate. It catalyses the reaction L-lysine + 2-oxoglutarate = (S)-2-amino-6-oxohexanoate + L-glutamate. Its function is as follows. Catalyzes the conversion of L-ornithine and 2-oxoglutarate to L-glutamate semialdehyde and L-glutamate. L-ornithine is the best substrate, but the enzyme also shows good activity toward L-lysine, and low activity toward D-ornithine, D-lysine, 5-aminovalerate, 6-aminohexanoate and GABA. The enzyme activity is specific for 2-oxoglutarate. This is Ornithine aminotransferase from Pyrococcus horikoshii (strain ATCC 700860 / DSM 12428 / JCM 9974 / NBRC 100139 / OT-3).